Here is a 968-residue protein sequence, read N- to C-terminus: Chaperone protein ClpB3, chloroplastic (968 aa).

The transit peptide at 1–67 (MATATTTATA…RLDHRPFVVR (67 aa)) directs the protein to the chloroplast. In terms of domain architecture, Clp R spans 78–222 (TQQEFTEMAW…KSAIESIRGK (145 aa)). Repeat stretches follow at residues 82 to 147 (FTEM…IQRQ) and 159 to 222 (LGRD…IRGK). Residues 237–485 (LEKYGKDLTA…KLKMEITSKP (249 aa)) form an i region. Position 282 to 289 (282 to 289 (GEPGVGKT)) interacts with ATP. The stretch at 488-606 (LDELDRSVIK…NEYLSSGKSM (119 aa)) forms a coiled coil. The tract at residues 611-802 (VLGSDIAEIV…VIIMTSNVGS (192 aa)) is II. An ATP-binding site is contributed by 685–692 (GPTGVGKT).

Belongs to the ClpA/ClpB family.

The protein resides in the plastid. It is found in the chloroplast. Its function is as follows. Molecular chaperone essential for chloroplast development and seedling viability. Mediates internal thylakoid membrane formation and confers thermotolerance to chloroplasts during heat stress. The protein is Chaperone protein ClpB3, chloroplastic (CLPB3) of Arabidopsis thaliana (Mouse-ear cress).